The primary structure comprises 671 residues: Archaeal Rqc2 homolog aRqcH (671 aa).

2 coiled-coil regions span residues 291–363 (KVVV…ARIK) and 410–465 (RKNA…MQMK).

Belongs to the NEMF family. In terms of assembly, associates with stalled 50S ribosomal subunits.

Probably part of the ribosome quality control system (RQC). May mediate the addition of alanine residues (Ala tailing) to incompletely synthesized nascent chains from stalled ribosomes, leading to their degradation. The polypeptide is Archaeal Rqc2 homolog aRqcH (Methanocaldococcus jannaschii (strain ATCC 43067 / DSM 2661 / JAL-1 / JCM 10045 / NBRC 100440) (Methanococcus jannaschii)).